The primary structure comprises 101 residues: MRIKADISRQQVKTHHLLVCVTIRIFVYTNRKPFIRCHGGVKAMQFWQGDGPKPTEKLIVEKIRFHLLFSRSYDRNCISCLNFCINGIVLRIFFIINRNTR.

The sequence is that of Putative protein p25 (25) from Acyrthosiphon pisum secondary endosymbiont phage 1 (Bacteriophage APSE-1).